Consider the following 392-residue polypeptide: Proteasomal ATPase-associated factor 1 (392 aa).

Ala-2 bears the N-acetylalanine mark. 5 WD repeats span residues 90-129 (IHTKSITCLDISSGGGLGVSSSADGSMKIWQASNGELRRV), 132-171 (GHVFDVNCCRFFPSGLVVLSGGMDAQLKIWSAEDASCVVT), 174-215 (GHKG…GVIA), 278-316 (IGSDAFNCCTFLSGFLLLAGTQDGNIYQLDVRNPRTPVQ), and 360-392 (ADCDPVYKVATWEKQIYTCCRDGLVRRYQLSDL).

Belongs to the WD repeat PAAF1/RPN14 family. In terms of assembly, interacts with PSMC1, PSMC2, PSMC3, PSMC4, PSMC5 and PSMC6. Interacts with SUPT6H.

Its function is as follows. Inhibits proteasome 26S assembly and activity by impairing the association of the 19S regulatory complex with the 20S core. Protects SUPT6H from proteasomal degradation. This chain is Proteasomal ATPase-associated factor 1 (PAAF1), found in Bos taurus (Bovine).